Reading from the N-terminus, the 567-residue chain is Unguisins hydrolase ungD (567 aa).

The protein belongs to the peptidase S12 family.

It participates in secondary metabolite biosynthesis. Its function is as follows. Hydrolase; part of the gene cluster that mediates the biosynthesis of the unguisins, gamma-aminobutyric acid (GABA)-containing fungal cyclic heptapeptides with the amino acid sequence cyclo-(D-Ala1-D-Val2-L-Phe3-D-Val4-D-Ala5-D-Trp6-GABA7) for unguisin A and cyclo-(D-Ala1-D-Val2-L-Leu3-D-Val4-D-Ala5-D-Trp6-GABA7) for unguisin B. Within the pathway, the hydrolase ungD catalyzes the hydrolysis between the D-tryptophan and GABA residues of unguisins A and B to produce the corresponding linear peptides. The alanine racemase ungC catalyzes the interconversion of L-alanine and D-alanine, providing the D-alanine which is accepted by the first adenylation domain of the nonribosomal peptide synthetase (NRPS) ungA. UngA is the main enzyme within the cluster which condenses the 7 residues using its respective 7 modules. The terminal condensation domain (Ct) is involved in cyclization with D-alanine and thereby releasing of unguisins A and B. In Aspergillus violaceofuscus (strain CBS 115571), this protein is Unguisins hydrolase ungD.